Reading from the N-terminus, the 227-residue chain is NDR1/HIN1-like protein 10 (227 aa).

A helical transmembrane segment spans residues 42–62 (VKVIISLIVILGVAALIFWLI). 2 N-linked (GlcNAc...) asparagine glycosylation sites follow: asparagine 138 and asparagine 210.

Expressed in senescing leaves.

Its subcellular location is the cell membrane. In terms of biological role, may play a role in plant immunity. In Arabidopsis thaliana (Mouse-ear cress), this protein is NDR1/HIN1-like protein 10.